Consider the following 158-residue polypeptide: NAD(P)H-quinone oxidoreductase subunit J, chloroplastic (158 aa).

It belongs to the complex I 30 kDa subunit family. In terms of assembly, NDH is composed of at least 16 different subunits, 5 of which are encoded in the nucleus.

It localises to the plastid. The protein localises to the chloroplast thylakoid membrane. It carries out the reaction a plastoquinone + NADH + (n+1) H(+)(in) = a plastoquinol + NAD(+) + n H(+)(out). The catalysed reaction is a plastoquinone + NADPH + (n+1) H(+)(in) = a plastoquinol + NADP(+) + n H(+)(out). In terms of biological role, NDH shuttles electrons from NAD(P)H:plastoquinone, via FMN and iron-sulfur (Fe-S) centers, to quinones in the photosynthetic chain and possibly in a chloroplast respiratory chain. The immediate electron acceptor for the enzyme in this species is believed to be plastoquinone. Couples the redox reaction to proton translocation, and thus conserves the redox energy in a proton gradient. In Chloranthus spicatus (Chulantree), this protein is NAD(P)H-quinone oxidoreductase subunit J, chloroplastic.